An 895-amino-acid polypeptide reads, in one-letter code: Probable inorganic carbon transporter subunit DabA 1 (895 aa).

Zn(2+)-binding residues include Cys-398, Asp-400, His-581, and Cys-596.

Belongs to the inorganic carbon transporter (TC 9.A.2) DabA family. Forms a complex with DabB. Zn(2+) is required as a cofactor.

The protein localises to the cell inner membrane. Its function is as follows. Part of an energy-coupled inorganic carbon pump. This Rhodopirellula baltica (strain DSM 10527 / NCIMB 13988 / SH1) protein is Probable inorganic carbon transporter subunit DabA 1.